The sequence spans 180 residues: Ribulose bisphosphate carboxylase small subunit, chloroplastic 4 (180 aa).

A chloroplast-targeting transit peptide spans 1–56 (MASSIVSSAAVATRANGAQASMVGPFTGLKSTASFPVSRKQNLDITSIASNGGRVR).

This sequence belongs to the RuBisCO small chain family. In terms of assembly, heterohexadecamer of 8 large and 8 small subunits.

The protein localises to the plastid. It localises to the chloroplast. Its function is as follows. RuBisCO catalyzes two reactions: the carboxylation of D-ribulose 1,5-bisphosphate, the primary event in carbon dioxide fixation, as well as the oxidative fragmentation of the pentose substrate. Both reactions occur simultaneously and in competition at the same active site. Although the small subunit is not catalytic it is essential for maximal activity. The protein is Ribulose bisphosphate carboxylase small subunit, chloroplastic 4 of Solanum tuberosum (Potato).